A 102-amino-acid polypeptide reads, in one-letter code: S-phase delaying protein 2 (102 aa).

A disordered region spans residues 43-62 (FPSYHKDQTDRNELPQQKHD). Positions 46–62 (YHKDQTDRNELPQQKHD) are enriched in basic and acidic residues.

It belongs to the DIF1/spd1 family.

It is found in the cytoplasm. It localises to the nucleus. Functionally, regulates the ribonucleotide reductase activity. In Schizosaccharomyces pombe (strain 972 / ATCC 24843) (Fission yeast), this protein is S-phase delaying protein 2 (spd2).